A 158-amino-acid polypeptide reads, in one-letter code: Inner membrane assembly complex subunit 17 (158 aa).

Residues 1 to 15 (MFRPLVKRVVTRRFL) constitute a mitochondrion transit peptide. Residues 16–85 (AAANNSNAHI…KTQETSLKKF (70 aa)) are Mitochondrial matrix-facing. A helical transmembrane segment spans residues 86 to 108 (VRPAWIFLLMGSIVYLSCHYVWW). At 109-158 (KLDYEEKELEYTHKVHQLESELAALNEAHNSSVSSDKNSKRSSRKWYKFW) the chain is on the mitochondrial intermembrane side. The stretch at 110–140 (LDYEEKELEYTHKVHQLESELAALNEAHNSS) forms a coiled coil.

This sequence belongs to the INA17 family. As to quaternary structure, component of the inner membrane assembly (INA) complex, composed of INA17 and INA22. Interacts with a subset of F(1)F(0)-ATP synthase subunits of the F(1)-domain and the peripheral stalk.

The protein resides in the mitochondrion inner membrane. Component of the INA complex (INAC) that promotes the biogenesis of mitochondrial F(1)F(0)-ATP synthase. INAC facilitates the assembly of the peripheral stalk and promotes the assembly of the catalytic F(1)-domain with the membrane-embedded F(0)-domain. The sequence is that of Inner membrane assembly complex subunit 17 from Kluyveromyces lactis (strain ATCC 8585 / CBS 2359 / DSM 70799 / NBRC 1267 / NRRL Y-1140 / WM37) (Yeast).